We begin with the raw amino-acid sequence, 136 residues long: MAQRRSSQTTKKVKRKNVTNGVAHIHSTHNNTIVTFSDEKGNVISWASSGTIGYKGTKKKTAYAAGLAAQNASEKAKEHGIREVSVRVKGIGQGRDAARKQIEVSGISVSQIVDVTPQAHNGTRPPKRVLKREKAR.

Disordered stretches follow at residues 1-20 (MAQRRSSQTTKKVKRKNVTN) and 115-136 (VTPQAHNGTRPPKRVLKREKAR). Residues 125–136 (PPKRVLKREKAR) show a composition bias toward basic residues.

The protein belongs to the universal ribosomal protein uS11 family. As to quaternary structure, part of the 30S ribosomal subunit. Interacts with proteins S7 and S18. Binds to IF-3.

Located on the platform of the 30S subunit, it bridges several disparate RNA helices of the 16S rRNA. Forms part of the Shine-Dalgarno cleft in the 70S ribosome. This Mycoplasmopsis pulmonis (strain UAB CTIP) (Mycoplasma pulmonis) protein is Small ribosomal subunit protein uS11.